Consider the following 295-residue polypeptide: Ethanolamine ammonia-lyase small subunit (295 aa).

Valine 207, glutamate 228, and cysteine 258 together coordinate adenosylcob(III)alamin.

Belongs to the EutC family. The basic unit is a heterodimer which dimerizes to form tetramers. The heterotetramers trimerize; 6 large subunits form a core ring with 6 small subunits projecting outwards. The cofactor is adenosylcob(III)alamin.

It is found in the bacterial microcompartment. It carries out the reaction ethanolamine = acetaldehyde + NH4(+). It participates in amine and polyamine degradation; ethanolamine degradation. Functionally, catalyzes the deamination of various vicinal amino-alcohols to oxo compounds. Allows this organism to utilize ethanolamine as the sole source of nitrogen and carbon in the presence of external vitamin B12. This is Ethanolamine ammonia-lyase small subunit from Escherichia coli O157:H7.